The primary structure comprises 44 residues: Photosystem I reaction center subunit IX (44 aa).

Residues 7-27 traverse the membrane as a helical segment; the sequence is YLSVAPVLSTLWFGALAGLLI.

This sequence belongs to the PsaJ family.

Its subcellular location is the plastid. The protein localises to the chloroplast thylakoid membrane. May help in the organization of the PsaE and PsaF subunits. This chain is Photosystem I reaction center subunit IX, found in Coffea arabica (Arabian coffee).